Consider the following 109-residue polypeptide: Putative glutaredoxin-C11 (109 aa).

Positions 2–108 constitute a Glutaredoxin domain; sequence AEMVARLASE…PLLKSAGALW (107 aa). A disulfide bond links Cys-22 and Cys-25. The Responsive for interaction with TGA factors motif lies at 106–109; the sequence is ALWL.

Belongs to the glutaredoxin family. CC-type subfamily.

It is found in the cytoplasm. It localises to the nucleus. Functionally, has a glutathione-disulfide oxidoreductase activity in the presence of NADPH and glutathione reductase. Reduces low molecular weight disulfides and proteins. This is Putative glutaredoxin-C11 (GRXC11) from Oryza sativa subsp. japonica (Rice).